A 209-amino-acid polypeptide reads, in one-letter code: Large ribosomal subunit protein uL3 (209 aa).

Residues 141-164 form a disordered region; it reads RAVGSMGGSSDPSRTFKSKKMPGH.

This sequence belongs to the universal ribosomal protein uL3 family. Part of the 50S ribosomal subunit. Forms a cluster with proteins L14 and L19.

In terms of biological role, one of the primary rRNA binding proteins, it binds directly near the 3'-end of the 23S rRNA, where it nucleates assembly of the 50S subunit. The chain is Large ribosomal subunit protein uL3 from Clostridium acetobutylicum (strain ATCC 824 / DSM 792 / JCM 1419 / IAM 19013 / LMG 5710 / NBRC 13948 / NRRL B-527 / VKM B-1787 / 2291 / W).